Here is a 401-residue protein sequence, read N- to C-terminus: E3 ubiquitin-protein ligase DA2 (401 aa).

The RING-type; degenerate zinc finger occupies 59–102 (CPICFLYYPSLNRSRCCMKSICTECFLQMKNPNSARPTQCPFCK). Basic and acidic residues predominate over residues 139–153 (KEMQDDEEKMQKRLE). Positions 139–164 (KEMQDDEEKMQKRLESCSSSTSAMTG) are disordered.

In terms of assembly, interacts with DA1 (via C-terminus).

It catalyses the reaction S-ubiquitinyl-[E2 ubiquitin-conjugating enzyme]-L-cysteine + [acceptor protein]-L-lysine = [E2 ubiquitin-conjugating enzyme]-L-cysteine + N(6)-ubiquitinyl-[acceptor protein]-L-lysine.. Its pathway is protein modification; protein ubiquitination. Functionally, E3 ubiquitin-protein ligase involved in the regulation of organ and seed size. Acts synergistically with DA1 to regulate seed size. Functions synergistically with DA1 to restrict cell proliferation in the maternal integuments of ovules and developing seeds. Seems to function independently of BB. Possesses E3 ubiquitin-protein ligase activity in vitro. Polyubiquitinates DA1, DAR1 and DAR2, but not DAR3. This chain is E3 ubiquitin-protein ligase DA2, found in Arabidopsis thaliana (Mouse-ear cress).